The following is a 599-amino-acid chain: Laccase-15 (599 aa).

Residues 1–29 (MKRCQSSRPTAAVAAVVAAVSMIIVLVSG) form the signal peptide. Plastocyanin-like domains follow at residues 46-162 (VVSQ…PRHG) and 173-328 (REVP…YSSN). N-linked (GlcNAc...) asparagine glycans are attached at residues Asn51 and Asn92. Residues His96 and His98 each coordinate Cu cation. The N-linked (GlcNAc...) asparagine glycan is linked to Asn124. His141 and His143 together coordinate Cu cation. N-linked (GlcNAc...) asparagine glycans are attached at residues Asn193, Asn217, Asn331, Asn355, Asn412, and Asn454. A Plastocyanin-like 3 domain is found at 444 to 586 (ELAERPPRAY…AAVFIVEDGP (143 aa)). Cu cation contacts are provided by Asn503, His506, His508, His565, Cys566, His567, His571, and Met576.

This sequence belongs to the multicopper oxidase family. It depends on Cu cation as a cofactor.

The protein resides in the secreted. The protein localises to the extracellular space. It is found in the apoplast. The enzyme catalyses 4 hydroquinone + O2 = 4 benzosemiquinone + 2 H2O. Functionally, lignin degradation and detoxification of lignin-derived products. The chain is Laccase-15 (LAC15) from Oryza sativa subsp. japonica (Rice).